Reading from the N-terminus, the 379-residue chain is NADH-rubredoxin oxidoreductase (379 aa).

Cystine bridges form between C26–C286 and C137–C216. FAD is bound by residues 33–35 (NSE), R42, A79, and Y125. D259 serves as a coordination point for FAD.

The protein belongs to the FAD-dependent oxidoreductase family. Monomer. The cofactor is FAD.

The catalysed reaction is 2 reduced [rubredoxin] + NAD(+) + H(+) = 2 oxidized [rubredoxin] + NADH. Its function is as follows. Catalyzes the NADH-dependent reduction of rubredoxin (Rd). NADPH is a very poor electron donor compared to NADH. Functions as an intermediate component in the electron transfer chain: NADH-&gt;NROR-&gt;Rd-&gt;FprA1/2. Also functions as an intermediate component in the electron transfer chains from NADH to revRbr and Dfx. Therefore, is a key electron carrier in an efficient multienzyme complex that can scavenge O(2) and reactive oxygen species (ROS), and thus plays an important role in the oxidative stress defense system in C.acetobutylicum, an obligate anaerobic bacterium. The chain is NADH-rubredoxin oxidoreductase (nroR) from Clostridium acetobutylicum (strain ATCC 824 / DSM 792 / JCM 1419 / IAM 19013 / LMG 5710 / NBRC 13948 / NRRL B-527 / VKM B-1787 / 2291 / W).